We begin with the raw amino-acid sequence, 102 residues long: Thioredoxin (102 aa).

The Thioredoxin domain occupies V2–Q102. An intrachain disulfide couples C30 to C33.

The protein belongs to the thioredoxin family.

Participates in various redox reactions through the reversible oxidation of its active center dithiol to a disulfide and catalyzes dithiol-disulfide exchange reactions. This Mycoplasma pneumoniae (strain ATCC 29342 / M129 / Subtype 1) (Mycoplasmoides pneumoniae) protein is Thioredoxin (trxA).